The chain runs to 491 residues: Glutamate--tRNA ligase (491 aa).

Residues 14–24 carry the 'HIGH' region motif; the sequence is PSPTGSPHVGL. Zn(2+) is bound by residues cysteine 111, cysteine 113, cysteine 136, and aspartate 138. The short motif at 257 to 261 is the 'KMSKS' region element; sequence KLSKR. Position 260 (lysine 260) interacts with ATP.

The protein belongs to the class-I aminoacyl-tRNA synthetase family. Glutamate--tRNA ligase type 1 subfamily. Monomer. Requires Zn(2+) as cofactor.

The protein resides in the cytoplasm. The enzyme catalyses tRNA(Glu) + L-glutamate + ATP = L-glutamyl-tRNA(Glu) + AMP + diphosphate. Its function is as follows. Catalyzes the attachment of glutamate to tRNA(Glu) in a two-step reaction: glutamate is first activated by ATP to form Glu-AMP and then transferred to the acceptor end of tRNA(Glu). In Nocardioides sp. (strain ATCC BAA-499 / JS614), this protein is Glutamate--tRNA ligase.